The chain runs to 168 residues: Sec-independent protein translocase protein TatB (168 aa).

The helical transmembrane segment at Met-1–Gly-21 threads the bilayer.

The protein belongs to the TatB family. As to quaternary structure, the Tat system comprises two distinct complexes: a TatABC complex, containing multiple copies of TatA, TatB and TatC subunits, and a separate TatA complex, containing only TatA subunits. Substrates initially bind to the TatABC complex, which probably triggers association of the separate TatA complex to form the active translocon.

It localises to the cell inner membrane. In terms of biological role, part of the twin-arginine translocation (Tat) system that transports large folded proteins containing a characteristic twin-arginine motif in their signal peptide across membranes. Together with TatC, TatB is part of a receptor directly interacting with Tat signal peptides. TatB may form an oligomeric binding site that transiently accommodates folded Tat precursor proteins before their translocation. In Cupriavidus pinatubonensis (strain JMP 134 / LMG 1197) (Cupriavidus necator (strain JMP 134)), this protein is Sec-independent protein translocase protein TatB.